Reading from the N-terminus, the 122-residue chain is Large ribosomal subunit protein uL14 (122 aa).

It belongs to the universal ribosomal protein uL14 family. Part of the 50S ribosomal subunit. Forms a cluster with proteins L3 and L19. In the 70S ribosome, L14 and L19 interact and together make contacts with the 16S rRNA in bridges B5 and B8.

Its function is as follows. Binds to 23S rRNA. Forms part of two intersubunit bridges in the 70S ribosome. The chain is Large ribosomal subunit protein uL14 from Myxococcus xanthus (strain DK1622).